A 298-amino-acid chain; its full sequence is Ribosomal protein L11 methyltransferase (298 aa).

S-adenosyl-L-methionine-binding residues include threonine 148, glycine 169, aspartate 191, and asparagine 233.

The protein belongs to the methyltransferase superfamily. PrmA family.

Its subcellular location is the cytoplasm. The catalysed reaction is L-lysyl-[protein] + 3 S-adenosyl-L-methionine = N(6),N(6),N(6)-trimethyl-L-lysyl-[protein] + 3 S-adenosyl-L-homocysteine + 3 H(+). Methylates ribosomal protein L11. In Marinobacter nauticus (strain ATCC 700491 / DSM 11845 / VT8) (Marinobacter aquaeolei), this protein is Ribosomal protein L11 methyltransferase.